A 1224-amino-acid chain; its full sequence is MNSRKSLSQPSFSNKVIDKNQLKNLIVWAFRNYGIARAANMADKLKDLGFHYATQAGISLSLEDLRIPPSKKSLLLSTIEEIKNTENKYRRGEITTVERFQKVIDTWNNASESLKQEVIEYFKETDPLNSVYMMAFSGARGNISQVRQLVGMRGLMADPQGQIIDLPISSNSREGLTVTDYFISSYGARKGLVDTALRTADSGYLTRRLVDVSQDVIIREVDCKTKKGIILEDLVDTQKVLINLEQALAGRVLAENVFHPEKGSLIAHTRQDISPNLAQEIVRAGIKKVLVRSPVTCNSRSSVCQYCYGWNLAHGRLVDLGEAVGIIAAQSIGEPGTQLAMRTFHTGGVFTGELAEQIYSPIDGKLTNLDFLSYMEVRTRHGEQALMTEKPTQVIIESSGKQKSIINLSKGTTLLVDNNEVVSKDQVIAESPRRNRLMIERAQKHVLSDLSGKICFSNLTVEETDNNQYTTRITKTGGLIWVLSGEVYNIPDSANIPVNKADQVNPGTILAQTELINQYSGKVRIYQNTSSSITNIQIITESVTVPACYIRTDVINKKESYILETDKKQRFLFKSFPDQKISDGHIVAELISDTYKTTSGGIIKYLDLNVSKKKTGPEKDAYDILSPGYILWISEETHEINKDSSLLLVNNGDVIESGTELVKNIFSKSSGIIEIIQKDGIVREIIIKPGFIYKLTDFYSIHDKSRGFLRPGETLHGNISTDKLVYWEYIENEQTPYILIRPVIVYSIPEIKSSLIENLTSQKVNQTKLKLVKRTVFRDGERVKSIDGVHLVTTNLVAEINHHDPNLVSAIEFLAKEDSSNCFALGLSTFETLSIKSIDNKVEKEQSQTRIIVSDGEYIQPLTVVASTEIISMSKGFVEEIHVEKNTSRRILLTTSIDNKVFDLHQQNTLVQVGDWIRCGDLISESIISLDSGQITHISQESATLRIARPYLVSNAAILHVDNNALIRKGETLAVLVFDRAKTGDIIQGLPRIEEILEARKKTDVLLNPHDILDASFNLYIECGLALYEAARLSFQEIQLLLVKEVQLVYQSQGVNISDKHIEVIVRQMTSKVKIENGEETGYLPGELVELQKIEQTNKSMTSRNKLNASYRPILLGITQASLNTESFISAASFQETTKVLTEAAISGKLDWLRGLKENVIIGRLIPAGTGFNMYDSHNDVANKKDINKNISTDNSPPSVRDDLDDIILDDRTARNYFNNKTVD.

Zn(2+) contacts are provided by Cys-223, Cys-297, Cys-304, and Cys-307.

Belongs to the RNA polymerase beta' chain family. RpoC2 subfamily. In terms of assembly, in plastids the minimal PEP RNA polymerase catalytic core is composed of four subunits: alpha, beta, beta', and beta''. When a (nuclear-encoded) sigma factor is associated with the core the holoenzyme is formed, which can initiate transcription. It depends on Zn(2+) as a cofactor.

Its subcellular location is the plastid. It is found in the chloroplast. The catalysed reaction is RNA(n) + a ribonucleoside 5'-triphosphate = RNA(n+1) + diphosphate. DNA-dependent RNA polymerase catalyzes the transcription of DNA into RNA using the four ribonucleoside triphosphates as substrates. The polypeptide is DNA-directed RNA polymerase subunit beta'' (Porphyra purpurea (Red seaweed)).